The chain runs to 87 residues: MAAYTSETAKFLQSVSSDQTWWKSRYNPGDSVPHSGIYRCTVCGKEITSNGNDPFPPQNHHQHSQQQAIKWQLIVRTDTKGDRFGIK.

Its function is as follows. This protein inhibits the multiplication of double-stranded DNA phages, such as P1 and lambda. The sequence is that of Protein L (L) from Escherichia coli.